Here is a 241-residue protein sequence, read N- to C-terminus: Ribonuclease PH (241 aa).

Phosphate-binding positions include Arg89 and 127 to 129 (GTR).

It belongs to the RNase PH family. As to quaternary structure, homohexameric ring arranged as a trimer of dimers.

The enzyme catalyses tRNA(n+1) + phosphate = tRNA(n) + a ribonucleoside 5'-diphosphate. Phosphorolytic 3'-5' exoribonuclease that plays an important role in tRNA 3'-end maturation. Removes nucleotide residues following the 3'-CCA terminus of tRNAs; can also add nucleotides to the ends of RNA molecules by using nucleoside diphosphates as substrates, but this may not be physiologically important. Probably plays a role in initiation of 16S rRNA degradation (leading to ribosome degradation) during starvation. The sequence is that of Ribonuclease PH from Xanthomonas axonopodis pv. citri (strain 306).